We begin with the raw amino-acid sequence, 160 residues long: 6,7-dimethyl-8-ribityllumazine synthase (160 aa).

Residues Phe-28, 62–64 (ALE), and 86–88 (AVI) each bind 5-amino-6-(D-ribitylamino)uracil. Residue 91–92 (ET) participates in (2S)-2-hydroxy-3-oxobutyl phosphate binding. The Proton donor role is filled by His-94. Residue Asn-119 participates in 5-amino-6-(D-ribitylamino)uracil binding. (2S)-2-hydroxy-3-oxobutyl phosphate is bound at residue Arg-133.

Belongs to the DMRL synthase family.

It carries out the reaction (2S)-2-hydroxy-3-oxobutyl phosphate + 5-amino-6-(D-ribitylamino)uracil = 6,7-dimethyl-8-(1-D-ribityl)lumazine + phosphate + 2 H2O + H(+). It participates in cofactor biosynthesis; riboflavin biosynthesis; riboflavin from 2-hydroxy-3-oxobutyl phosphate and 5-amino-6-(D-ribitylamino)uracil: step 1/2. Catalyzes the formation of 6,7-dimethyl-8-ribityllumazine by condensation of 5-amino-6-(D-ribitylamino)uracil with 3,4-dihydroxy-2-butanone 4-phosphate. This is the penultimate step in the biosynthesis of riboflavin. This Nitrosospira multiformis (strain ATCC 25196 / NCIMB 11849 / C 71) protein is 6,7-dimethyl-8-ribityllumazine synthase.